The primary structure comprises 241 residues: MFLTRSEYDRGVNTFSPEGRLFQVEYALEAIKLGIGVQCEEGVVLAVEKRLTSPLLEPSSIQKVVEIDYHLICALSGLVADARTIIDHARIETQNHRFNYNEPMGVESCVQSICDLALRFGENRNSGEERMSRPFGVALLIAGIDEKGPSLYYSDPSGTFTQFHAKAIGAGSEGAQTTLQEKYSKTLTIAECQKLALTTLKQVMEEAITTTNVELAVITKADQKFKIYNKEELATVIQTLE.

The protein belongs to the peptidase T1A family. In terms of assembly, the 26S proteasome consists of a 20S proteasome core and two 19S regulatory subunits. The 20S proteasome core is composed of 28 subunits that are arranged in four stacked rings, resulting in a barrel-shaped structure. The two end rings are each formed by seven alpha subunits, and the two central rings are each formed by seven beta subunits. The catalytic chamber with the active sites is on the inside of the barrel.

It localises to the cytoplasm. Its subcellular location is the nucleus. Functionally, the proteasome is a multicatalytic proteinase complex which is characterized by its ability to cleave peptides with Arg, Phe, Tyr, Leu, and Glu adjacent to the leaving group at neutral or slightly basic pH. The proteasome has an ATP-dependent proteolytic activity. In Dictyostelium discoideum (Social amoeba), this protein is Proteasome subunit alpha type-5 (psmA5).